Here is a 366-residue protein sequence, read N- to C-terminus: tRNA/tmRNA (uracil-C(5))-methyltransferase (366 aa).

Residues glutamine 190, tyrosine 218, asparagine 223, glutamate 239, and aspartate 299 each coordinate S-adenosyl-L-methionine. The Nucleophile role is filled by cysteine 324. Glutamate 358 acts as the Proton acceptor in catalysis.

It belongs to the class I-like SAM-binding methyltransferase superfamily. RNA M5U methyltransferase family. TrmA subfamily.

The catalysed reaction is uridine(54) in tRNA + S-adenosyl-L-methionine = 5-methyluridine(54) in tRNA + S-adenosyl-L-homocysteine + H(+). It catalyses the reaction uridine(341) in tmRNA + S-adenosyl-L-methionine = 5-methyluridine(341) in tmRNA + S-adenosyl-L-homocysteine + H(+). Its function is as follows. Dual-specificity methyltransferase that catalyzes the formation of 5-methyluridine at position 54 (m5U54) in all tRNAs, and that of position 341 (m5U341) in tmRNA (transfer-mRNA). The sequence is that of tRNA/tmRNA (uracil-C(5))-methyltransferase from Escherichia coli O81 (strain ED1a).